Here is a 61-residue protein sequence, read N- to C-terminus: Probable tautomerase stu1128 (61 aa).

The Proton acceptor; via imino nitrogen role is filled by Pro-2.

Belongs to the 4-oxalocrotonate tautomerase family.

This Streptococcus thermophilus (strain ATCC BAA-250 / LMG 18311) protein is Probable tautomerase stu1128.